A 224-amino-acid chain; its full sequence is Protein-L-isoaspartate O-methyltransferase (224 aa).

Ser-70 is a catalytic residue.

Belongs to the methyltransferase superfamily. L-isoaspartyl/D-aspartyl protein methyltransferase family.

The protein resides in the cytoplasm. It carries out the reaction [protein]-L-isoaspartate + S-adenosyl-L-methionine = [protein]-L-isoaspartate alpha-methyl ester + S-adenosyl-L-homocysteine. Catalyzes the methyl esterification of L-isoaspartyl residues in peptides and proteins that result from spontaneous decomposition of normal L-aspartyl and L-asparaginyl residues. It plays a role in the repair and/or degradation of damaged proteins. This is Protein-L-isoaspartate O-methyltransferase from Cellvibrio japonicus (strain Ueda107) (Pseudomonas fluorescens subsp. cellulosa).